The chain runs to 464 residues: Protein FAM90A9 (464 aa).

3 disordered regions span residues 1 to 42 (MMAR…DPRL), 70 to 389 (PATL…HDGA), and 411 to 437 (APSFHSPEKPGTFLAQSPHVSEKSEAP). Composition is skewed to basic and acidic residues over residues 74-89 (GKKEGKENLKPWKPRV) and 97-114 (NKDKGEKEERPRQQDPQR). Residues 180 to 197 (LASLSPLRKASLSSSSSL) show a composition bias toward low complexity.

This sequence belongs to the FAM90 family.

In Homo sapiens (Human), this protein is Protein FAM90A9 (FAM90A9).